A 444-amino-acid polypeptide reads, in one-letter code: Type VII secretion system protein EssB (444 aa).

Over 1–229 the chain is Cytoplasmic; sequence MVKNHDPKNE…RKVGHTVFKW (229 aa). The chain crosses the membrane as a helical span at residues 230-250; sequence VAIGMTTLSVLLIAFLAFLYF. Residues 251–444 lie on the Extracellular side of the membrane; the sequence is SVMKHNERIE…EKRQEAERKK (194 aa). The segment at 366 to 444 is disordered; the sequence is KNNGDLSNDK…EKRQEAERKK (79 aa). A compositionally biased stretch (basic and acidic residues) spans 372–444; the sequence is SNDKRSEETK…EKRQEAERKK (73 aa). The stretch at 387-443 forms a coiled coil; it reads LQDILDKEKQVKDEKAKSEEEKAKAKDEKLKQQEENEKKQKEQAQKDKEKRQEAERK.

The protein belongs to the EssB family.

Its subcellular location is the cell membrane. Functionally, component of the type VII secretion system (Ess). Required for the secretion of EsxA. The chain is Type VII secretion system protein EssB from Staphylococcus aureus (strain MRSA252).